Here is a 183-residue protein sequence, read N- to C-terminus: Acyl-homoserine-lactone synthase (183 aa).

This sequence belongs to the autoinducer synthase family.

It catalyses the reaction a fatty acyl-[ACP] + S-adenosyl-L-methionine = an N-acyl-L-homoserine lactone + S-methyl-5'-thioadenosine + holo-[ACP] + H(+). In terms of biological role, involved in the synthesis of the acyl-homoserine lactone (AHL) signal N-(3-hydroxydodecanoyl)-L-HSL (3-hydroxy-C(12)-HSL or OH-dDHL). Probably part of a quorum-sensing system with AnoR. The sequence is that of Acyl-homoserine-lactone synthase from Acinetobacter nosocomialis.